Consider the following 402-residue polypeptide: MDALRAMWKGTISFGLVTIPVKLYAATESKDLRFNLLHEPCQTPVQYRKYCPTCEREVESGEIVKGYEFDRGRYVTLRDEDFESIPLAARRTLEIVAFVRLEEIDPIYFDKTYYLEPGEGGAKAYGLLRHAMEVTGRVAIARVVLRAKESLAALRVFREGVLAMETMHFPDEVRPVAALTGIAQPELRPQEIEMATGLIESLTMPFSPERFENTYREALLELIQAKIAGAPPAEPGPAPEQGRVVDLMEALRASIRAAEAQRAAGGATGGAAGADGTPPAPVARSPEAPARRAIPGLPGDPAASVPGVPAAPVPRAPGVTGAPTPGTPPAAVPGVPATAVPGTPGAPVPTAPGVPSAPAPGTSPTSVPGVQTAPNGAAPPGPFAGSDRAAEVGPDETAPGGP.

A Ku domain is found at I12–P185. A disordered region spans residues Q261–P402. Low complexity-rich tracts occupy residues G299–V308 and V332–T343. Residues P344–P358 are compositionally biased toward pro residues. The segment covering A359–G376 has biased composition (low complexity).

Belongs to the prokaryotic Ku family. Homodimer. Interacts with LigD.

With LigD forms a non-homologous end joining (NHEJ) DNA repair enzyme, which repairs dsDNA breaks with reduced fidelity. Binds linear dsDNA with 5'- and 3'- overhangs but not closed circular dsDNA nor ssDNA. Recruits and stimulates the ligase activity of LigD. In Symbiobacterium thermophilum (strain DSM 24528 / JCM 14929 / IAM 14863 / T), this protein is Non-homologous end joining protein Ku.